Reading from the N-terminus, the 204-residue chain is Imidazole glycerol phosphate synthase subunit HisH (204 aa).

In terms of domain architecture, Glutamine amidotransferase type-1 spans 5-204 (KVVIIDTGCA…AKLIQNFLEL (200 aa)). The Nucleophile role is filled by cysteine 80. Residues histidine 186 and glutamate 188 contribute to the active site.

Heterodimer of HisH and HisF.

The protein localises to the cytoplasm. It catalyses the reaction 5-[(5-phospho-1-deoxy-D-ribulos-1-ylimino)methylamino]-1-(5-phospho-beta-D-ribosyl)imidazole-4-carboxamide + L-glutamine = D-erythro-1-(imidazol-4-yl)glycerol 3-phosphate + 5-amino-1-(5-phospho-beta-D-ribosyl)imidazole-4-carboxamide + L-glutamate + H(+). It carries out the reaction L-glutamine + H2O = L-glutamate + NH4(+). The protein operates within amino-acid biosynthesis; L-histidine biosynthesis; L-histidine from 5-phospho-alpha-D-ribose 1-diphosphate: step 5/9. IGPS catalyzes the conversion of PRFAR and glutamine to IGP, AICAR and glutamate. The HisH subunit catalyzes the hydrolysis of glutamine to glutamate and ammonia as part of the synthesis of IGP and AICAR. The resulting ammonia molecule is channeled to the active site of HisF. This is Imidazole glycerol phosphate synthase subunit HisH from Vibrio parahaemolyticus serotype O3:K6 (strain RIMD 2210633).